A 164-amino-acid chain; its full sequence is UPF0114 protein Avin_40830 (164 aa).

A run of 4 helical transmembrane segments spans residues 15–35 (LLAP…LKFF), 53–73 (LILV…LVMV), 103–125 (GSLK…LRVF), and 136–156 (LLWY…MSYL).

The protein belongs to the UPF0114 family.

Its subcellular location is the cell membrane. The chain is UPF0114 protein Avin_40830 from Azotobacter vinelandii (strain DJ / ATCC BAA-1303).